The chain runs to 626 residues: Putative folylpolyglutamate synthase (626 aa).

Position 144–147 (144–147 (GKGS)) interacts with ATP. Mg(2+) is bound by residues Ser168, Glu235, and His263. 2 residues coordinate ATP: Arg412 and Asp430.

Belongs to the folylpolyglutamate synthase family.

The catalysed reaction is (6S)-5,6,7,8-tetrahydrofolyl-(gamma-L-Glu)(n) + L-glutamate + ATP = (6S)-5,6,7,8-tetrahydrofolyl-(gamma-L-Glu)(n+1) + ADP + phosphate + H(+). The protein operates within cofactor biosynthesis; tetrahydrofolylpolyglutamate biosynthesis. In terms of biological role, conversion of folates to polyglutamate derivatives. The chain is Putative folylpolyglutamate synthase (folC) from Dictyostelium discoideum (Social amoeba).